The following is a 374-amino-acid chain: MAFDLPNDFRCPISLEIMSDPVILQSGHTFDRVSIQQWIDSGNRTCPITKLPLSETPYLIPNHALRSLILNFAHVSLKESSRPRTQQEHSHSQSQALISTLVSQSSSNASKLESLTRLVRLTKRDSSIRRKVTESGAVRAALDCVDSCNQVLQEKSLSLLLNLSLEDDNKVGLVADGVIRRIVTVLRVGSPDCKAIAATLLTSLAVVEVNKATIGSYPDAISALVSLLRVGNDRERKESATALYALCSFPDNRKRVVDCGSVPILVEAADSGLERAVEVLGLLVKCRGGREEMSKVSGFVEVLVNVLRNGNLKGIQYSLFILNCLCCCSGEIVDEVKREGVVEICFGFEDNESEKIRRNATILVHTLLGIPMSS.

Residues 4–79 form the U-box domain; it reads DLPNDFRCPI…LNFAHVSLKE (76 aa). ARM repeat units follow at residues 126-165, 167-206, 208-248, 250-288, and 289-327; these read SSIR…NLSL, DDNK…SLAV, EVNK…ALCS, PDNR…KCRG, and GREE…CLCC.

In terms of tissue distribution, expressed in the whole plant.

It carries out the reaction S-ubiquitinyl-[E2 ubiquitin-conjugating enzyme]-L-cysteine + [acceptor protein]-L-lysine = [E2 ubiquitin-conjugating enzyme]-L-cysteine + N(6)-ubiquitinyl-[acceptor protein]-L-lysine.. Its pathway is protein modification; protein ubiquitination. Its function is as follows. Functions as an E3 ubiquitin ligase. Involved in the age-dependent pseudo-self-compatibility process. The sequence is that of U-box domain-containing protein 8 (PUB8) from Arabidopsis thaliana (Mouse-ear cress).